We begin with the raw amino-acid sequence, 206 residues long: FMN-dependent NADH:quinone oxidoreductase (206 aa).

FMN contacts are provided by residues serine 10 and 15–17 (SVS).

This sequence belongs to the azoreductase type 1 family. As to quaternary structure, homodimer. Requires FMN as cofactor.

The catalysed reaction is 2 a quinone + NADH + H(+) = 2 a 1,4-benzosemiquinone + NAD(+). It catalyses the reaction N,N-dimethyl-1,4-phenylenediamine + anthranilate + 2 NAD(+) = 2-(4-dimethylaminophenyl)diazenylbenzoate + 2 NADH + 2 H(+). Its function is as follows. Quinone reductase that provides resistance to thiol-specific stress caused by electrophilic quinones. Also exhibits azoreductase activity. Catalyzes the reductive cleavage of the azo bond in aromatic azo compounds to the corresponding amines. This Acidobacterium capsulatum (strain ATCC 51196 / DSM 11244 / BCRC 80197 / JCM 7670 / NBRC 15755 / NCIMB 13165 / 161) protein is FMN-dependent NADH:quinone oxidoreductase.